The following is a 263-amino-acid chain: Small ribosomal subunit protein eS4 (263 aa).

The region spanning Leu42–Asp104 is the S4 RNA-binding domain.

It belongs to the eukaryotic ribosomal protein eS4 family.

The chain is Small ribosomal subunit protein eS4 (RpS4) from Bombyx mori (Silk moth).